Here is an 865-residue protein sequence, read N- to C-terminus: Protein translocase subunit SecA (865 aa).

ATP-binding positions include Gln-85, 103–107 (GEGKT), and Asp-505. Zn(2+) is bound by residues Cys-847, Cys-849, Cys-858, and His-859.

This sequence belongs to the SecA family. In terms of assembly, monomer and homodimer. Part of the essential Sec protein translocation apparatus which comprises SecA, SecYEG and auxiliary proteins SecDF. Other proteins may also be involved. Zn(2+) serves as cofactor.

The protein resides in the cell membrane. Its subcellular location is the cytoplasm. It catalyses the reaction ATP + H2O + cellular proteinSide 1 = ADP + phosphate + cellular proteinSide 2.. Part of the Sec protein translocase complex. Interacts with the SecYEG preprotein conducting channel. Has a central role in coupling the hydrolysis of ATP to the transfer of proteins into and across the cell membrane, serving as an ATP-driven molecular motor driving the stepwise translocation of polypeptide chains across the membrane. This chain is Protein translocase subunit SecA, found in Lactococcus lactis subsp. cremoris (strain SK11).